The chain runs to 169 residues: Probable glutathione peroxidase 2 (169 aa).

C41 is an active-site residue.

It belongs to the glutathione peroxidase family. In terms of assembly, interacts with DJ1A. Expressed in leaves, stems, flowers, green siliques and roots.

It localises to the cytoplasm. It is found in the cytosol. The protein localises to the nucleus. It catalyses the reaction 2 glutathione + H2O2 = glutathione disulfide + 2 H2O. May constitute a glutathione peroxidase-like protective system against oxidative stresses. This Arabidopsis thaliana (Mouse-ear cress) protein is Probable glutathione peroxidase 2 (GPX2).